The primary structure comprises 311 residues: Porphobilinogen deaminase (311 aa).

Residue C241 is modified to S-(dipyrrolylmethanemethyl)cysteine.

Belongs to the HMBS family. Monomer. Dipyrromethane serves as cofactor.

The catalysed reaction is 4 porphobilinogen + H2O = hydroxymethylbilane + 4 NH4(+). Its pathway is porphyrin-containing compound metabolism; protoporphyrin-IX biosynthesis; coproporphyrinogen-III from 5-aminolevulinate: step 2/4. In terms of biological role, tetrapolymerization of the monopyrrole PBG into the hydroxymethylbilane pre-uroporphyrinogen in several discrete steps. In Bacillus pumilus (strain SAFR-032), this protein is Porphobilinogen deaminase.